The sequence spans 158 residues: NAD(P)H-quinone oxidoreductase subunit J, chloroplastic (158 aa).

This sequence belongs to the complex I 30 kDa subunit family. As to quaternary structure, NDH is composed of at least 16 different subunits, 5 of which are encoded in the nucleus.

The protein resides in the plastid. The protein localises to the chloroplast thylakoid membrane. The catalysed reaction is a plastoquinone + NADH + (n+1) H(+)(in) = a plastoquinol + NAD(+) + n H(+)(out). It carries out the reaction a plastoquinone + NADPH + (n+1) H(+)(in) = a plastoquinol + NADP(+) + n H(+)(out). NDH shuttles electrons from NAD(P)H:plastoquinone, via FMN and iron-sulfur (Fe-S) centers, to quinones in the photosynthetic chain and possibly in a chloroplast respiratory chain. The immediate electron acceptor for the enzyme in this species is believed to be plastoquinone. Couples the redox reaction to proton translocation, and thus conserves the redox energy in a proton gradient. The protein is NAD(P)H-quinone oxidoreductase subunit J, chloroplastic of Nandina domestica (Heavenly bamboo).